Here is an 81-residue protein sequence, read N- to C-terminus: UPF0248 protein SSO2687 (81 aa).

Belongs to the UPF0248 family.

The sequence is that of UPF0248 protein SSO2687 from Saccharolobus solfataricus (strain ATCC 35092 / DSM 1617 / JCM 11322 / P2) (Sulfolobus solfataricus).